We begin with the raw amino-acid sequence, 364 residues long: Cobalt-precorrin-5B C(1)-methyltransferase (364 aa).

Belongs to the CbiD family.

It carries out the reaction Co-precorrin-5B + S-adenosyl-L-methionine = Co-precorrin-6A + S-adenosyl-L-homocysteine. Its pathway is cofactor biosynthesis; adenosylcobalamin biosynthesis; cob(II)yrinate a,c-diamide from sirohydrochlorin (anaerobic route): step 6/10. Functionally, catalyzes the methylation of C-1 in cobalt-precorrin-5B to form cobalt-precorrin-6A. This is Cobalt-precorrin-5B C(1)-methyltransferase from Pseudomonas putida (strain ATCC 47054 / DSM 6125 / CFBP 8728 / NCIMB 11950 / KT2440).